The chain runs to 316 residues: Transaldolase (316 aa).

Lys-127 (schiff-base intermediate with substrate) is an active-site residue.

The protein belongs to the transaldolase family. Type 2 subfamily.

Its subcellular location is the cytoplasm. The catalysed reaction is D-sedoheptulose 7-phosphate + D-glyceraldehyde 3-phosphate = D-erythrose 4-phosphate + beta-D-fructose 6-phosphate. It participates in carbohydrate degradation; pentose phosphate pathway; D-glyceraldehyde 3-phosphate and beta-D-fructose 6-phosphate from D-ribose 5-phosphate and D-xylulose 5-phosphate (non-oxidative stage): step 2/3. In terms of biological role, transaldolase is important for the balance of metabolites in the pentose-phosphate pathway. The sequence is that of Transaldolase (tal) from Helicobacter pylori (strain ATCC 700392 / 26695) (Campylobacter pylori).